Reading from the N-terminus, the 356-residue chain is CMP-sialic acid transporter 2 (356 aa).

The span at 1 to 24 (MEYRRVKDQESYDVVSQKDIESPG) shows a compositional bias: basic and acidic residues. The segment at 1–44 (MEYRRVKDQESYDVVSQKDIESPGERSLSSTSATSSLSTAGASK) is disordered. Residues 1–52 (MEYRRVKDQESYDVVSQKDIESPGERSLSSTSATSSLSTAGASKGKNSWKLK) lie on the Cytoplasmic side of the membrane. A compositionally biased stretch (low complexity) spans 27–44 (SLSSTSATSSLSTAGASK). A helical membrane pass occupies residues 53–73 (SIVTLALTLLTSSQAILIVWS). Residues 74–82 (KRAGKYEYS) are Lumenal-facing. The helical transmembrane segment at 83 to 103 (VTTANFSVEALKCLLSLIALY) threads the bilayer. Topologically, residues 104–125 (RTWNSQGVTEDNRLSTSFDEVS) are cytoplasmic. Residues 126 to 146 (VYPIPAILYMVKNLLQYYIFA) form a helical membrane-spanning segment. The Lumenal segment spans residues 147-149 (YVD). A helical transmembrane segment spans residues 150–172 (APAYQILKNLNIISTGVLYRIIL). Residues 173 to 175 (KKK) lie on the Cytoplasmic side of the membrane. A helical membrane pass occupies residues 176 to 196 (LSEIQWAAFILLCAGCTTAQL). At 197 to 211 (NPSSDHVLQTPIQGW) the chain is on the lumenal side. A helical transmembrane segment spans residues 212-232 (VMAIVMALLSGFAGVYTEAII). Residues 233 to 239 (KKRPSRN) are Cytoplasmic-facing. Residues 240-260 (INVQNFWLYIFGMLFNLVAIC) form a helical membrane-spanning segment. The Lumenal portion of the chain corresponds to 261 to 277 (VQDFDAVMNKGFFHGYS). A helical transmembrane segment spans residues 278-298 (FITVLMILNHALSGIAVSMVM). The Cytoplasmic segment spans residues 299–314 (KYADNIVKVYSTSVAM). The chain crosses the membrane as a helical span at residues 315 to 335 (LLTAVVSVFLFGFHLSLAFFL). The Lumenal portion of the chain corresponds to 336-356 (GSTVVSVSVYLHSVGKPQPQK).

Belongs to the nucleotide-sugar transporter family. CMP-Sialate:CMP antiporter (TC 2.A.7.12) subfamily. Expressed in roots, leaves and stalks.

It is found in the golgi apparatus membrane. Sugar transporter involved in the transport of CMP-sialic acid from the cytoplasm into the Golgi. May transport important nucleotide sugars such as CMP-Kdo (2-keto-3-deoxy-D-manno-octulosonic acid) in physiological conditions. The sequence is that of CMP-sialic acid transporter 2 from Oryza sativa subsp. japonica (Rice).